Consider the following 117-residue polypeptide: Phosphoribosyl-ATP pyrophosphatase (117 aa).

A compositionally biased stretch (basic and acidic residues) spans 96–105 (GVSGIEEKLS). Residues 96–117 (GVSGIEEKLSRSQNQPEPTKAE) form a disordered region. Over residues 106–117 (RSQNQPEPTKAE) the composition is skewed to polar residues.

The protein belongs to the PRA-PH family.

Its subcellular location is the cytoplasm. It carries out the reaction 1-(5-phospho-beta-D-ribosyl)-ATP + H2O = 1-(5-phospho-beta-D-ribosyl)-5'-AMP + diphosphate + H(+). It functions in the pathway amino-acid biosynthesis; L-histidine biosynthesis; L-histidine from 5-phospho-alpha-D-ribose 1-diphosphate: step 2/9. The sequence is that of Phosphoribosyl-ATP pyrophosphatase from Nitrosomonas eutropha (strain DSM 101675 / C91 / Nm57).